A 263-amino-acid polypeptide reads, in one-letter code: MSKIFGIVNITTDSFSDGGLYLDTDKAIEHALHLVEDGADVIDLGAASSNPDTTEVGVVEEIKRLKPVIKALKEKGISISVDTFKPEVQSFCIEQKVDFINDIQGFPYPEIYSGLAKSDCKLVLMHSVQRIGAATKVETNPEEVFTSMMEFFKERIAALVEAGVKRERIILDPGMGFFLGSNPETSILVLKRFPEIQEAFNLQVMIAVSRKSFLGKITGTDVKSRLAPTLAAEMYAYKKGADYLRTHDVKSLSDALKISKALG.

In terms of domain architecture, Pterin-binding spans 2–257 (SKIFGIVNIT…DVKSLSDALK (256 aa)). Asn9 provides a ligand contact to Mg(2+). Ser49 contributes to the 4-aminobenzoate binding site. 3 residues coordinate (7,8-dihydropterin-6-yl)methyl diphosphate: Asp82, Asn101, and Asp172. The 6-hydroxymethyl-7,8-dihydropterin site is built by Asn101 and Asp172. Phe177 contacts 4-aminobenzoate. Lys211 contributes to the (7,8-dihydropterin-6-yl)methyl diphosphate binding site. Lys211 is a binding site for 6-hydroxymethyl-7,8-dihydropterin. Position 212 (Ser212) interacts with 4-aminobenzoate. A (7,8-dihydropterin-6-yl)methyl diphosphate-binding site is contributed by 245–247 (RTH).

It belongs to the DHPS family. Mg(2+) is required as a cofactor.

It catalyses the reaction (7,8-dihydropterin-6-yl)methyl diphosphate + 4-aminobenzoate = 7,8-dihydropteroate + diphosphate. It participates in cofactor biosynthesis; tetrahydrofolate biosynthesis; 7,8-dihydrofolate from 2-amino-4-hydroxy-6-hydroxymethyl-7,8-dihydropteridine diphosphate and 4-aminobenzoate: step 1/2. In terms of biological role, catalyzes the condensation of para-aminobenzoate (pABA) with 6-hydroxymethyl-7,8-dihydropterin diphosphate (DHPt-PP) to form 7,8-dihydropteroate (H2Pte), the immediate precursor of folate derivatives. Confers resistance to sulfonamide antibiotics, including sulfamethoxazole (SMX), sulfadiazine and sulfisoxazole. This chain is Dihydropteroate synthase type-3, found in Escherichia coli.